Consider the following 344-residue polypeptide: Succinylglutamate desuccinylase (344 aa).

Zn(2+) is bound by residues H63, E66, and H160. E224 is a catalytic residue.

The protein belongs to the AspA/AstE family. Succinylglutamate desuccinylase subfamily. The cofactor is Zn(2+).

The catalysed reaction is N-succinyl-L-glutamate + H2O = L-glutamate + succinate. Its pathway is amino-acid degradation; L-arginine degradation via AST pathway; L-glutamate and succinate from L-arginine: step 5/5. Its function is as follows. Transforms N(2)-succinylglutamate into succinate and glutamate. The protein is Succinylglutamate desuccinylase of Shewanella baltica (strain OS223).